The primary structure comprises 358 residues: Protein-glutamate methylesterase/protein-glutamine glutaminase 1 (358 aa).

Residues 8-125 form the Response regulatory domain; that stretch reads RVLIVDDSAV…ARGLEGYAEE (118 aa). A 4-aspartylphosphate modification is found at Asp59. The region spanning 165–352 is the CheB-type methylesterase domain; the sequence is FRTTDRLIAI…LDRVAERLLA (188 aa). Catalysis depends on residues Ser177, His203, and Asp299.

It belongs to the CheB family. In terms of processing, phosphorylated by CheA. Phosphorylation of the N-terminal regulatory domain activates the methylesterase activity.

It localises to the cytoplasm. It carries out the reaction [protein]-L-glutamate 5-O-methyl ester + H2O = L-glutamyl-[protein] + methanol + H(+). The enzyme catalyses L-glutaminyl-[protein] + H2O = L-glutamyl-[protein] + NH4(+). Its function is as follows. Involved in chemotaxis. Part of a chemotaxis signal transduction system that modulates chemotaxis in response to various stimuli. Catalyzes the demethylation of specific methylglutamate residues introduced into the chemoreceptors (methyl-accepting chemotaxis proteins or MCP) by CheR. Also mediates the irreversible deamidation of specific glutamine residues to glutamic acid. In Xanthomonas axonopodis pv. citri (strain 306), this protein is Protein-glutamate methylesterase/protein-glutamine glutaminase 1.